The chain runs to 297 residues: tRNA pseudouridine synthase B (297 aa).

Asp-44 serves as the catalytic Nucleophile.

Belongs to the pseudouridine synthase TruB family. Type 1 subfamily.

It catalyses the reaction uridine(55) in tRNA = pseudouridine(55) in tRNA. Its function is as follows. Responsible for synthesis of pseudouridine from uracil-55 in the psi GC loop of transfer RNAs. In Corynebacterium efficiens (strain DSM 44549 / YS-314 / AJ 12310 / JCM 11189 / NBRC 100395), this protein is tRNA pseudouridine synthase B.